The primary structure comprises 2999 residues: MASTTAGRRWPPRRRSSRRGPTPRSRAPGAKLSAPEAGPPRRGPLPRGGAGRDTLLGAKATPSSPAARRYVTALGPPQPRGSTDSACAALPQPVPHEPREAAFRLAPASERGASVSPARIPRRRRRVPAMWDPRAARTPPRELAMLLCNKSNAFYNLGKWNEAFLAAKECLQWDPTYVKGYYRAGYSLLHLLQPYEAARMFFEGLRLLQRSPDQLQVPDFLVGIFTTMSSDSIVLQSFLPCFDHIFTTGFSTEVWQYVIQKLAKKGLWHSFLLLSAKKDRLPSNIHVSELSLQSLFEKYVFIGFYEKLEQVPKLVQWLVSIGANIETIGPNPLHALMRLCIQARESQLFRWVMDQKPEWKEHINHRDDAGCTVLHVAAAHFPGYTSRRQTEDVQMLLSFGADPTLLDGHARTVVDVLKRNKNFRAIDKINSHLEKLASSSKGLSEIPAGLVCDVNRDCATTFIKFLLERQKWPEVLLLLTRKVSGQPQLRNGVIKDCDLSDLDICTVIPHLSSWDQRKTQLLSRLIDSGALPEGLQDSQDRPLLMCLRHEDFDLAFLLLTKGADPRSVSLVEGDTPLHAALHIFLDINADIGFNFLSHLLDLFLSNPTEFYYLNPNVQDSNGNTLMHLLFQKGMLKRTKKLIDLLVKFDINFNLKNKAGKGVRHRIKKNDALLLAWNKALTESRRKNRQDPAAHLGRLSRSSAPGHTSQLKSQTSFKSLPCGTADTTLSKGLTESLPDVQVSRQEPEAVRTRSLRDRLVQDITVLIQQVELGMPLPEDSPQRDSPKVAAGTEGKKDKLQRTQRMGSSGCSGNNPVASEAGDGAQAGPGASQLVPVGNRLGVASDNQENWTMQEIQACLQDFDNMTWEIECTSEMLKKLSSKVMTKVIKKKIILAIQQLGNGEWTQGLQKRLKHSKGNIQLFEAKLDKGARMLWELAIDFSARCSENSEKIIGTERNTYSLEKSGRVYTEIIRIWDIVLDHCKLSDSIMAICSAYTRGLSCVLRKKLKGINKGQVSANMKIQKRIPRCYVEDTEAEKSLEQVDPEYFPPASAVETEYSIMKFHSFSTNMALNILNDMTATVEYPFRVGELEYAVIDLNPKPLEPIILIGRSGTGKTTCCLYRLWKKFHVYWEKAEQAGSPLLSKQILPKRRLEVEPGKEGPGREEEEHEEEEGSIKVETVDGIDEEQESEACAGGATVEPAGDSQGAEGCVPDHPHQLEHLHQIFVTKNHVLCQEVQRNFIELSKSTKATSHYKPLDPNVHKLQDLRDENFPLFVTSKQLLLLLDASLPKPFFLRNEDGSLKRTIVGWSTQEEFSIPSWEEDDEEVEADGNYNEEEKATETQTGDSDPRVYVTFEVFTNEIWPKMIKGRSSYNPALIWKEIKSFLKGSFEALSCPHGRLTEEAYKKLGRKRSPNFKEDRSEIYSLFCLYQQIRSQKGYFDEEDVLYNLSWRLSKLRVLPWSIHELYGDEIQDFTQAELALLMKCINDPNAMFLTGDTAQSIMKGVAFRFSDLLSLFHYASRSTVDKQCAVRKPKRIHQLYQNYRSHSGILNLASGVVDLLQFYFPESFDRLPRDSGLFDGPKPTLLDSCSVSDLAILLRGNKRKTQPIEFGAHQVILVANEKAKEKIPEELGLALVLTVYEAKGLEFDDVLLYNFFTDSEAYKEWKIISSFTPSSDSREEKWPLVDVPLERSSPSQARSLMVNPEMYKLLNGELKQLYTAITRARVNLWIFDENLEKRAPAFKYFIRRDFVQVVKTDENKDFDDSMFVKTSTPYEWIIQGDYYAKHQCWKVAAKCYQKGDALEKEKLALAHYTALNMKSKKFSPKEKELQYLELAKTYLECNEPKLSLKCLSYAKEFQLSAQLCERLGKIRDAAYFYKRSQCFQDAFRCFEQIQEFDLALRMYCQEELFEEAAIAVEKYEEMLKNKTFPIPKLSYSASQFYLEAAAKYLSANKSKEMMAVLSKLDVEDQLVFLKSRKCLAEAAELLNREGRREEAALLMKQHGCLLEAARLTANKDFQASCLLGVARFNVARDSDIEHTKVILREALDLCYQTSQLAGIAEAQFLLGIILRDFQKLRDAFIKFDMLNHSAGMVEALYEAASLCESEHQKVLALAPGGLEVLLNLVRALKNVTNNAEKEMVKSCFEFFGIFQVDAKYCQIAQNDPGPILRIILDLDLTLSEKKTKDHFLIVTDQVKLALNKHLLGRLCQITQILLGKAYPGICMRFIVGLKCEDEQCEDFHRPLRRCEAKCMVQSKMHLVAINGLLLEAKKVFPNVLAEDLEEMDYILSPDTYGLCKSFLNLLFPRHFHQRVLSENPMACKDILKPNYKSFRSFRCALKEYIHDLFQKESAHSRRESTDLWLSAMQAFLLSSSYPEDFEKLLRQEEDSYNRELKVLESDREDRGRGRGSRVRGIEGKFGMLVPNREDENVEKSYLCFIRLLESSMDQLYVRRNPGDYKRLFFRFMNVLIKRCKAPLVPSIINTVVLLELQFVHCGVVLTRLWKNAVLCLPKSYIALLHFWEFLYGKKDRESGEVFSIIQEYKPKDVTRAIRDFRFHLSYLVKVLCGYENMNFNVLLDSFSEIDYVISGEAERTLVLCLVMLVNAEEVLQPFCKPLLFRHFREIQTRLQLMSMDWPGQVPKRLLKVVQRVLVAASVKSVAEALQDLLFERDEEYLVDCHWRWDSVHTKGTVVRGLCHEEVRLNRLLCTGPMDQFADSEWDFGEDETHELDELAQEDRDNFLAAILSQKQRKALIQRKLRRVCLVVSLCIRWRRWVQTEHSREDREVRPGNFKRADVDRTQCDLCGVKFTRSPESYFSPGKAFEGTATEAVLISRAELEGRECRERISESYEQHIRLEGHRRQQAAYQKYLDFFHEKVDPIIEEGKVVVQGIEQSVWIRSHLGSKEQSHMLQRKVQEHIRRVSDLVEELYRRKAWAEAEEVMTQQVKILTLSVKNAQEWLKKTELRLKDEGTVQEEEYENEVEDFGELRPRRRAQKCGKQRKH.

The tract at residues 1 to 87 (MASTTAGRRW…QPRGSTDSAC (87 aa)) is disordered. Positions 19–36 (RGPTPRSRAPGAKLSAPE) are enriched in low complexity. TPR repeat units lie at residues 144 to 177 (AMLL…DPTY) and 179 to 211 (KGYY…LQRS). 6 ANK repeats span residues 297-327 (EKYV…NIET), 328-361 (IGPN…EWKE), 369-405 (AGCT…DPTL), 538-567 (SQDR…DPRS), 572-593 (EGDT…DIGF), and 621-654 (NGNT…NFNL). Disordered regions lie at residues 684-722 (RRKN…LPCG), 773-831 (MPLP…GASQ), 1151-1211 (LEVE…GCVP), and 1318-1344 (WEED…QTGD). Composition is skewed to polar residues over residues 699-717 (SRSS…TSFK) and 801-815 (TQRM…NNPV). The segment covering 1151–1164 (LEVEPGKEGPGREE) has biased composition (basic and acidic residues). Over residues 1318 to 1327 (WEEDDEEVEA) the composition is skewed to acidic residues. TPR repeat units lie at residues 1772–1805 (PYEW…EKEK) and 1866–1899 (LGKI…DLAL).

Expressed only in the brain. Detected in the hippocampus, hypothalamus and cingulate gyrus.

This is TPR and ankyrin repeat-containing protein 1 (Trank1) from Mus musculus (Mouse).